Reading from the N-terminus, the 463-residue chain is 23S rRNA (uracil(1939)-C(5))-methyltransferase RlmD (463 aa).

A TRAM domain is found at Lys6–Glu76. 4 residues coordinate [4Fe-4S] cluster: Cys90, Cys96, Cys99, and Cys178. S-adenosyl-L-methionine-binding residues include Gln288, Phe317, Asn322, Glu341, Asp368, and Asp389. Cys415 acts as the Nucleophile in catalysis.

Belongs to the class I-like SAM-binding methyltransferase superfamily. RNA M5U methyltransferase family. RlmD subfamily.

It catalyses the reaction uridine(1939) in 23S rRNA + S-adenosyl-L-methionine = 5-methyluridine(1939) in 23S rRNA + S-adenosyl-L-homocysteine + H(+). Catalyzes the formation of 5-methyl-uridine at position 1939 (m5U1939) in 23S rRNA. This Acinetobacter baumannii (strain AYE) protein is 23S rRNA (uracil(1939)-C(5))-methyltransferase RlmD.